The sequence spans 130 residues: Small ribosomal subunit protein uS9 (130 aa).

The protein belongs to the universal ribosomal protein uS9 family.

In Hydrogenovibrio crunogenus (strain DSM 25203 / XCL-2) (Thiomicrospira crunogena), this protein is Small ribosomal subunit protein uS9.